The sequence spans 228 residues: Lipoprotein-releasing system ATP-binding protein LolD (228 aa).

Residues 6 to 225 (LEAKDVYKHF…ILHMQDGLWV (220 aa)) enclose the ABC transporter domain. 42-49 (GASGSGKS) provides a ligand contact to ATP.

Belongs to the ABC transporter superfamily. Lipoprotein translocase (TC 3.A.1.125) family. As to quaternary structure, the complex is composed of two ATP-binding proteins (LolD) and two transmembrane proteins (LolC and LolE).

The protein localises to the cell inner membrane. Functionally, part of the ABC transporter complex LolCDE involved in the translocation of mature outer membrane-directed lipoproteins, from the inner membrane to the periplasmic chaperone, LolA. Responsible for the formation of the LolA-lipoprotein complex in an ATP-dependent manner. The protein is Lipoprotein-releasing system ATP-binding protein LolD of Acinetobacter baylyi (strain ATCC 33305 / BD413 / ADP1).